A 296-amino-acid polypeptide reads, in one-letter code: Tuberculosinyl adenosine transferase (296 aa).

This sequence belongs to the diterpene synthase family. As to quaternary structure, homodimer. It depends on Mg(2+) as a cofactor.

It carries out the reaction tuberculosinyl diphosphate + adenosine + H(+) = 1-tuberculosinyladenosine + diphosphate. The catalysed reaction is tuberculosinyl diphosphate + H2O = tuberculosinol + diphosphate. The enzyme catalyses tuberculosinyl diphosphate + H2O = (13R)-edaxadiene + diphosphate. It catalyses the reaction tuberculosinyl diphosphate + H2O = (13S)-edaxadiene + diphosphate. In terms of biological role, tuberculosinyl transferase that catalyzes the condensation of adenosine and tuberculosinyl diphosphate (TbPP) to generate 1-tuberculosinyladenosine (1-TbAd), which acts as an antiacid that directly protects M.tuberculosis from acid pH and physically remodels M.tuberculosis phagolysosomes. In addition, acts as a phosphatase that catalyzes the diphosphate-removal from TbPP to produce both tuberculosinol (TOH) and isotuberculosinol (iso-TOH). The sequence is that of Tuberculosinyl adenosine transferase from Mycobacterium tuberculosis (strain CDC 1551 / Oshkosh).